We begin with the raw amino-acid sequence, 53 residues long: Ribulose bisphosphate carboxylase large chain (53 aa).

Residues 1-2 (MS) constitute a propeptide that is removed on maturation. Residue Pro-3 is modified to N-acetylproline. N6,N6,N6-trimethyllysine is present on Lys-14.

It belongs to the RuBisCO large chain family. Type I subfamily. Heterohexadecamer of 8 large chains and 8 small chains.

Its subcellular location is the plastid. It is found in the chloroplast. The catalysed reaction is 2 (2R)-3-phosphoglycerate + 2 H(+) = D-ribulose 1,5-bisphosphate + CO2 + H2O. The enzyme catalyses D-ribulose 1,5-bisphosphate + O2 = 2-phosphoglycolate + (2R)-3-phosphoglycerate + 2 H(+). Its function is as follows. RuBisCO catalyzes two reactions: the carboxylation of D-ribulose 1,5-bisphosphate, the primary event in carbon dioxide fixation, as well as the oxidative fragmentation of the pentose substrate in the photorespiration process. Both reactions occur simultaneously and in competition at the same active site. The sequence is that of Ribulose bisphosphate carboxylase large chain (rbcL) from Malus domestica (Apple).